We begin with the raw amino-acid sequence, 368 residues long: Meiotic driver wtf23 (368 aa).

The disordered stretch occupies residues 1–98 (MKNKYYPLRS…SSGTADNSST (98 aa)). Over residues 11–29 (SMDELSAKNDNEIDLEKGP) the composition is skewed to basic and acidic residues. Polar residues-rich tracts occupy residues 57 to 72 (GANNPNLFNTDESTTP) and 89 to 98 (SSGTADNSST). The next 7 helical transmembrane spans lie at 105-124 (FLSFISIFVLNVPAVCYLTY), 139-158 (YFGVWCAICLMIFISLWYFY), 170-192 (IFLAQCIKVTVVFLAQCVKVISI), 202-221 (MIIIWLLWLIICCILFGCVK), 234-256 (STCTISAVLLLIVSSVCIPFWTF), 266-283 (VFLLQSGIVLVLNGTMFL), and 328-350 (GIAFILGGIGNAMMGLANAFRGG).

This sequence belongs to the WTF family. As to quaternary structure, homomer. Forms protein aggregates. The two isoforms can interact with each other and with themselves. High sequence similarity is required for their interaction.

The protein resides in the spore membrane. The protein localises to the vacuole membrane. Its subcellular location is the ascus epiplasm. It localises to the cytoplasm. It is found in the endoplasmic reticulum membrane. In terms of biological role, promotes unequal transmission of alleles from the parental zygote to progeny spores by acting as poison/antidote system where the poison and antidote proteins are produced from the same locus; the poison component is trans-acting and targets all spores within an ascus whereas the antidote component is spore-specific, leading to poisoning of all progeny that do not inherit the allele. Localizes isoform 2 to the vacuole thereby facilitating its degradation. Functionally, forms toxic aggregates that disrupt spore maturation. The protein is Meiotic driver wtf23 of Schizosaccharomyces pombe (strain 972 / ATCC 24843) (Fission yeast).